Consider the following 347-residue polypeptide: Probable E3 ubiquitin-protein ligase DTX3 (347 aa).

The tract at residues 111-157 is disordered; it reads GGEHPELHRPGPPPLRAAPLLPPGARGLPPPPPPLPPPLPPRLREDA. Residues 120 to 151 show a composition bias toward pro residues; it reads PGPPPLRAAPLLPPGARGLPPPPPPLPPPLPP. The RING-type zinc-finger motif lies at 164–205; the sequence is CPICLGEIQNAKTLEKCRHSFCEGCITRALQVKKACPMCGRF.

The protein belongs to the Deltex family. Homodimer. May form a heterodimer with other members of the Deltex family. Interacts with NOTCH1. In terms of tissue distribution, strongly expressed in testis and brain. Weakly expressed in kidney.

The protein resides in the cytoplasm. It catalyses the reaction S-ubiquitinyl-[E2 ubiquitin-conjugating enzyme]-L-cysteine + [acceptor protein]-L-lysine = [E2 ubiquitin-conjugating enzyme]-L-cysteine + N(6)-ubiquitinyl-[acceptor protein]-L-lysine.. Its pathway is protein modification; protein ubiquitination. In terms of biological role, regulator of Notch signaling, a signaling pathway involved in cell-cell communications that regulates a broad spectrum of cell-fate determinations. Probably acts both as a positive and negative regulator of Notch, depending on the developmental and cell context. Functions as a ubiquitin ligase protein in vitro, suggesting that it may regulate the Notch pathway via some ubiquitin ligase activity. The chain is Probable E3 ubiquitin-protein ligase DTX3 (Dtx3) from Mus musculus (Mouse).